The following is a 387-amino-acid chain: Protein RecA, chromosomal (387 aa).

80–87 (GPESSGKT) is a binding site for ATP. The interval 352–387 (EVAETTEDTSTKAKATKAKKEEKVVETEEIELELED) is disordered. Acidic residues predominate over residues 378 to 387 (TEEIELELED).

It belongs to the RecA family.

It is found in the cytoplasm. Functionally, can catalyze the hydrolysis of ATP in the presence of single-stranded DNA, the ATP-dependent uptake of single-stranded DNA by duplex DNA, and the ATP-dependent hybridization of homologous single-stranded DNAs. It interacts with LexA causing its activation and leading to its autocatalytic cleavage. The chain is Protein RecA, chromosomal from Lactococcus lactis subsp. lactis (strain IL1403) (Streptococcus lactis).